The sequence spans 439 residues: Polygalacturonase QRT2 (439 aa).

An N-terminal signal peptide occupies residues 1–21; sequence MYEKIIILSVFLLTFLPSCFS. Residues 43 to 69 form a disordered region; the sequence is RQHQHGHNTRNSHLKNRHGYAPRSSPR. Over residues 44–62 the composition is skewed to basic residues; that stretch reads QHQHGHNTRNSHLKNRHGY. 2 PbH1 repeats span residues 201-250 and 251-272; these read CNNL…HVSG and TQNILIQDSIVRTGDDCISIVS. Aspartate 265 acts as the Proton donor in catalysis. Histidine 288 is a catalytic residue. 2 PbH1 repeats span residues 304–325 and 333–354; these read VSNVVVNKATLIGTTNGVRIKT and AKNIIFQDIIMKNVTNPIIINQ.

Belongs to the glycosyl hydrolase 28 family. In terms of tissue distribution, expressed predominantly in roots with lower expression levels in rosette leaves, flower buds and siliques. Bearly detected in seeds. Found in flowers undergoing floral organ abscission. Also expressed early in anther development, at the time of microspore separation.

Its subcellular location is the secreted. It is found in the cell wall. The catalysed reaction is (1,4-alpha-D-galacturonosyl)n+m + H2O = (1,4-alpha-D-galacturonosyl)n + (1,4-alpha-D-galacturonosyl)m.. Polygalacturonase required for cell type-specific pectin degradation to separate microspores. Involved in anther dehiscence and floral organ abscission. The protein is Polygalacturonase QRT2 (QRT2) of Arabidopsis thaliana (Mouse-ear cress).